The primary structure comprises 341 residues: Alpha-1,4-N-acetylglucosaminyltransferase (341 aa).

Over 1-4 (MLKE) the chain is Cytoplasmic. Residues 5–25 (IYLSLSLVLVFACGLLYQLTM) form a helical; Signal-anchor for type II membrane protein membrane-spanning segment. Topologically, residues 26-341 (RSQCFFACLP…VSKKPGTGSR (316 aa)) are lumenal. Asn100 is a glycosylation site (N-linked (GlcNAc...) asparagine). Positions 168 to 170 (DTD) match the DXD motif motif.

The protein belongs to the glycosyltransferase 32 family.

The protein localises to the golgi apparatus membrane. Its pathway is protein modification; protein glycosylation. Functionally, catalyzes the transfer of N-acetylglucosamine (GlcNAc) to core 2 branched O-glycans. Necessary for the synthesis of type III mucin which is specifically produced in the stomach, duodenum, and pancreatic duct. May protect against inflammation-associated gastric adenocarcinoma. This chain is Alpha-1,4-N-acetylglucosaminyltransferase, found in Mus musculus (Mouse).